The primary structure comprises 358 residues: Peptide chain release factor 1 (358 aa).

Gln-233 bears the N5-methylglutamine mark.

The protein belongs to the prokaryotic/mitochondrial release factor family. In terms of processing, methylated by PrmC. Methylation increases the termination efficiency of RF1.

Its subcellular location is the cytoplasm. In terms of biological role, peptide chain release factor 1 directs the termination of translation in response to the peptide chain termination codons UAG and UAA. In Clostridium botulinum (strain Okra / Type B1), this protein is Peptide chain release factor 1.